The following is a 227-amino-acid chain: Cytochrome c oxidase subunit 2 (227 aa).

Over 1–14 (MAYPFQLGLQDATS) the chain is Mitochondrial intermembrane. The chain crosses the membrane as a helical span at residues 15–45 (PIMEELTNFHDHTLMIVFLISSLVLYIISLM). Residues 46-59 (LTTKLTHTSTMDAQ) are Mitochondrial matrix-facing. A helical transmembrane segment spans residues 60 to 87 (EVETIWTILPAVILILIALPSLRILYMM). The Mitochondrial intermembrane segment spans residues 88-227 (DEINNPVLTV…HFENWSTSMI (140 aa)). Cu cation is bound by residues H161, C196, E198, C200, H204, and M207. Residue E198 participates in Mg(2+) binding.

It belongs to the cytochrome c oxidase subunit 2 family. As to quaternary structure, component of the cytochrome c oxidase (complex IV, CIV), a multisubunit enzyme composed of 14 subunits. The complex is composed of a catalytic core of 3 subunits MT-CO1, MT-CO2 and MT-CO3, encoded in the mitochondrial DNA, and 11 supernumerary subunits COX4I, COX5A, COX5B, COX6A, COX6B, COX6C, COX7A, COX7B, COX7C, COX8 and NDUFA4, which are encoded in the nuclear genome. The complex exists as a monomer or a dimer and forms supercomplexes (SCs) in the inner mitochondrial membrane with NADH-ubiquinone oxidoreductase (complex I, CI) and ubiquinol-cytochrome c oxidoreductase (cytochrome b-c1 complex, complex III, CIII), resulting in different assemblies (supercomplex SCI(1)III(2)IV(1) and megacomplex MCI(2)III(2)IV(2)). Found in a complex with TMEM177, COA6, COX18, COX20, SCO1 and SCO2. Interacts with TMEM177 in a COX20-dependent manner. Interacts with COX20. Interacts with COX16. Requires Cu cation as cofactor.

It is found in the mitochondrion inner membrane. It carries out the reaction 4 Fe(II)-[cytochrome c] + O2 + 8 H(+)(in) = 4 Fe(III)-[cytochrome c] + 2 H2O + 4 H(+)(out). In terms of biological role, component of the cytochrome c oxidase, the last enzyme in the mitochondrial electron transport chain which drives oxidative phosphorylation. The respiratory chain contains 3 multisubunit complexes succinate dehydrogenase (complex II, CII), ubiquinol-cytochrome c oxidoreductase (cytochrome b-c1 complex, complex III, CIII) and cytochrome c oxidase (complex IV, CIV), that cooperate to transfer electrons derived from NADH and succinate to molecular oxygen, creating an electrochemical gradient over the inner membrane that drives transmembrane transport and the ATP synthase. Cytochrome c oxidase is the component of the respiratory chain that catalyzes the reduction of oxygen to water. Electrons originating from reduced cytochrome c in the intermembrane space (IMS) are transferred via the dinuclear copper A center (CU(A)) of subunit 2 and heme A of subunit 1 to the active site in subunit 1, a binuclear center (BNC) formed by heme A3 and copper B (CU(B)). The BNC reduces molecular oxygen to 2 water molecules using 4 electrons from cytochrome c in the IMS and 4 protons from the mitochondrial matrix. The protein is Cytochrome c oxidase subunit 2 (MT-CO2) of Praomys taitae (Taita hill rat).